A 228-amino-acid chain; its full sequence is ATP-dependent dethiobiotin synthetase BioD 1 (228 aa).

ATP is bound at residue Glu13–Val18. Thr17 lines the Mg(2+) pocket. Lys38 is an active-site residue. Residue Ser42 participates in substrate binding. ATP is bound by residues Asp55, Glu116–Gly119, Asn176–Asp177, and Pro205–Leu207. Residues Asp55 and Glu116 each contribute to the Mg(2+) site.

This sequence belongs to the dethiobiotin synthetase family. Homodimer. It depends on Mg(2+) as a cofactor.

It localises to the cytoplasm. The catalysed reaction is (7R,8S)-7,8-diammoniononanoate + CO2 + ATP = (4R,5S)-dethiobiotin + ADP + phosphate + 3 H(+). It participates in cofactor biosynthesis; biotin biosynthesis; biotin from 7,8-diaminononanoate: step 1/2. Functionally, catalyzes a mechanistically unusual reaction, the ATP-dependent insertion of CO2 between the N7 and N8 nitrogen atoms of 7,8-diaminopelargonic acid (DAPA, also called 7,8-diammoniononanoate) to form a ureido ring. This Salmonella typhimurium (strain LT2 / SGSC1412 / ATCC 700720) protein is ATP-dependent dethiobiotin synthetase BioD 1.